Reading from the N-terminus, the 271-residue chain is Regulatory protein RecX (271 aa).

Belongs to the RecX family.

Its subcellular location is the cytoplasm. Modulates RecA activity. This Lactobacillus johnsonii (strain CNCM I-12250 / La1 / NCC 533) protein is Regulatory protein RecX.